Here is a 484-residue protein sequence, read N- to C-terminus: Glutamate--tRNA ligase (484 aa).

The 'HIGH' region motif lies at Pro-10 to Gly-20. Residues Lys-252–Arg-256 carry the 'KMSKS' region motif. Lys-255 lines the ATP pocket.

This sequence belongs to the class-I aminoacyl-tRNA synthetase family. Glutamate--tRNA ligase type 1 subfamily. As to quaternary structure, monomer.

It is found in the cytoplasm. The catalysed reaction is tRNA(Glu) + L-glutamate + ATP = L-glutamyl-tRNA(Glu) + AMP + diphosphate. Its function is as follows. Catalyzes the attachment of glutamate to tRNA(Glu) in a two-step reaction: glutamate is first activated by ATP to form Glu-AMP and then transferred to the acceptor end of tRNA(Glu). This Mycoplasma genitalium (strain ATCC 33530 / DSM 19775 / NCTC 10195 / G37) (Mycoplasmoides genitalium) protein is Glutamate--tRNA ligase.